The chain runs to 355 residues: Homeobox protein knotted-1-like 12 (355 aa).

Disordered regions lie at residues 52–82 and 207–233; these read AAGPSQYHGHGHPHHGGGHHHSKHGGAGGGE and ECVGSSEDDMDPSGRENEPPEIDPRAE. A compositionally biased stretch (basic residues) spans 60-75; the sequence is GHGHPHHGGGHHHSKH. The segment covering 218–233 has biased composition (basic and acidic residues); that stretch reads PSGRENEPPEIDPRAE. An ELK domain is found at 236-256; it reads ELKFQLLKKYSGYLSSLRQEF. A DNA-binding region (homeobox; TALE-type) is located at residues 257-320; it reads SKKKKKGKLP…NQRKRHWKPS (64 aa).

This sequence belongs to the TALE/KNOX homeobox family. Expressed in stems, rachis and inflorescence.

It localises to the nucleus. Its function is as follows. Probable transcription factor that may be involved in shoot formation during embryogenesis. This is Homeobox protein knotted-1-like 12 (OSH15) from Oryza sativa subsp. japonica (Rice).